A 539-amino-acid polypeptide reads, in one-letter code: Acid-sensing ion channel 4 (539 aa).

The Cytoplasmic segment spans residues 1 to 68 (MPIEIVCKIK…GPGPHGLRRT (68 aa)). A helical membrane pass occupies residues 69–89 (LWVLALLTSLAAFLYQAASLA). The Extracellular segment spans residues 90–438 (RGYLTRPHLV…EQRAAYGLSA (349 aa)). 2 disulfides stabilise this stretch: Cys-118–Cys-202 and Cys-180–Cys-187. N-linked (GlcNAc...) asparagine glycans are attached at residues Asn-191, Asn-243, Asn-341, and Asn-376. 5 disulfide bridges follow: Cys-296–Cys-375, Cys-318–Cys-371, Cys-322–Cys-369, Cys-331–Cys-353, and Cys-333–Cys-345. The chain crosses the membrane as a helical span at residues 439–459 (LLGDLGGQMGLFIGASILTLL). The GAS motif; ion selectivity filter motif lies at 452 to 454 (GAS). At 460-539 (EILDYIYEVS…PGSLFEDFAC (80 aa)) the chain is on the cytoplasmic side. The segment at 501 to 531 (EQSPCPNRGRAEGGGASNLLPNHHHPHGPPG) is disordered.

It belongs to the amiloride-sensitive sodium channel (TC 1.A.6) family. ASIC4 subfamily. As to quaternary structure, homotrimer. Heterotrimer; with other ASIC proteins producing functional channels. Expressed in brain, spinal cord and dorsal root ganglion (DRG). Expressed by a subset of sensory neurons in the DRG. Expressed by granule cells in the cerebellar cortex. In hippocampus, expression is detected in dentate gyrus granule cells, in pyramidal cells of CA1-CA3 subfields and in interneurons of the striatum oriens and radiatum of all subfields. In cerebral cortex expressed in small, medium and large pyramidal cells in layers 2, 3 and 5 respectively. Also expressed in striatum, globus pallidus, inferior and superior calliculi, amygdala, magnocellular preoptic nucleus, islands of Calleja and large neurons of olfactory tubercules.

It is found in the cell membrane. Functionally, does not exhibit measurable stand-alone pH-gated sodium channel activity but may form pH-gated heterotrimeric sodium channels. Its activity could also depend on alternative gating mechanisms. This is Acid-sensing ion channel 4 from Rattus norvegicus (Rat).